Consider the following 196-residue polypeptide: Imidazole glycerol phosphate synthase subunit HisH (196 aa).

One can recognise a Glutamine amidotransferase type-1 domain in the interval 2-196; the sequence is KIIIINTNCS…EQLIKNFLEI (195 aa). C77 serves as the catalytic Nucleophile. Active-site residues include H178 and E180.

Heterodimer of HisH and HisF.

The protein resides in the cytoplasm. The catalysed reaction is 5-[(5-phospho-1-deoxy-D-ribulos-1-ylimino)methylamino]-1-(5-phospho-beta-D-ribosyl)imidazole-4-carboxamide + L-glutamine = D-erythro-1-(imidazol-4-yl)glycerol 3-phosphate + 5-amino-1-(5-phospho-beta-D-ribosyl)imidazole-4-carboxamide + L-glutamate + H(+). It carries out the reaction L-glutamine + H2O = L-glutamate + NH4(+). The protein operates within amino-acid biosynthesis; L-histidine biosynthesis; L-histidine from 5-phospho-alpha-D-ribose 1-diphosphate: step 5/9. Its function is as follows. IGPS catalyzes the conversion of PRFAR and glutamine to IGP, AICAR and glutamate. The HisH subunit catalyzes the hydrolysis of glutamine to glutamate and ammonia as part of the synthesis of IGP and AICAR. The resulting ammonia molecule is channeled to the active site of HisF. In Blochmanniella floridana, this protein is Imidazole glycerol phosphate synthase subunit HisH.